The primary structure comprises 249 residues: Low affinity immunoglobulin gamma Fc region receptor III-A (249 aa).

An N-terminal signal peptide occupies residues 1–20 (MWQLLLPTALVLTAFSGIQA). The Extracellular portion of the chain corresponds to 21 to 203 (GLQKAVVNLD…SPSMFPPWHQ (183 aa)). Ig-like C2-type domains follow at residues 22-102 (LQKA…VQLE) and 119-188 (EGDP…FRIS). Intrachain disulfides connect cysteine 46/cysteine 88 and cysteine 127/cysteine 171. N-linked (GlcNAc...) asparagine glycans are attached at residues asparagine 62, asparagine 164, and asparagine 179. Residues 204–224 (ITFCLLIGLLFAIDTVLYFSV) traverse the membrane as a helical segment. Topologically, residues 225 to 249 (RRGLQSPVADYEEPKIQWSKEPQDK) are cytoplasmic. Tyrosine 235 carries the post-translational modification Phosphotyrosine.

In terms of assembly, forms a heterooligomeric complex with ITAM-containing signaling subunits FCER1G. Interacts (via transmembrane domain) with signaling subunits; this interaction is a prerequisite for receptor complex expression on the cell surface and intracellular signal transduction. Binds the Fc region of antigen-complexed IgG. Post-translationally, N-glycosylated. In terms of processing, phosphorylated following receptor ligation. Detected on myeloid cells, peripheral blood monocytes, splenic and bone marrow dendritic cells, and thioglycollate-elicited macrophages and neutrophils but absent from lymphoid populations with no expression observed on T cells, B cells, NK cells or other granulocytes (at protein level). Expressed in peripheral blood leukocytes, spleen, liver, thymus and small intestine. Expressed in splenic dendritic cell subsets (at protein level).

It is found in the cell membrane. In terms of biological role, receptor for the invariable Fc fragment of immunoglobulin gamma (IgG). Binds with intermediate affinity to both IgG2a and IgG2b. Can bind to IgG2a and IgG2b monomers. Does not display binding to IgG1 or IgG3. Recognizes neutralizing virus-specific IgGs displayed on the cell surface of infected cells and triggers antibody-dependent cellular cytotoxicity (ADCC). Confers protection to lethal influenza virus infection. On splenic dendritic cells, uptakes antigen immune complexes and efficiently divert them into MHC class I and II antigen presentation pathways to provide for superior priming of CD4-positive and CD8-positive T cell immune responses. Mediates neutrophil activation by IgG complexes redundantly with FCGR2A. Plays a role in promoting bone resorption by enhancing osteoclast differentiation following binding to IgG2a. Also acts as a receptor for the Fc region of immunoglobulin epsilon (IgE). Binds with low affinity to both the a and b allotypes of IgE. Has also been shown to bind to IgE allotype a only but not to allotype b. Binds aggregated IgE but not the monomeric form and bound monomeric IgG is readily displaced by IgE complexes. Binding to IgE promotes macrophage-mediated phagocytosis, antigen presentation to T cells, production of pro-inflammatory cytokines and the late phase of cutaneous allergic reactions. Mediates enhanced ADCC in response to afucosylated IgGs. The chain is Low affinity immunoglobulin gamma Fc region receptor III-A from Mus musculus (Mouse).